A 428-amino-acid polypeptide reads, in one-letter code: Adenylosuccinate synthetase (428 aa).

GTP is bound by residues 12-18 and 40-42; these read GDEGKGK and GHT. Aspartate 13 functions as the Proton acceptor in the catalytic mechanism. 2 residues coordinate Mg(2+): aspartate 13 and glycine 40. IMP-binding positions include 13 to 16, 38 to 41, threonine 130, arginine 144, glutamine 225, threonine 240, and arginine 304; these read DEGK and NAGH. Catalysis depends on histidine 41, which acts as the Proton donor. 300–306 contacts substrate; the sequence is VTTGRAR. GTP-binding positions include arginine 306, 332-334, and 414-416; these read KID and SVG.

The protein belongs to the adenylosuccinate synthetase family. Homodimer. Mg(2+) serves as cofactor.

Its subcellular location is the cytoplasm. It carries out the reaction IMP + L-aspartate + GTP = N(6)-(1,2-dicarboxyethyl)-AMP + GDP + phosphate + 2 H(+). It participates in purine metabolism; AMP biosynthesis via de novo pathway; AMP from IMP: step 1/2. Its function is as follows. Plays an important role in the de novo pathway of purine nucleotide biosynthesis. Catalyzes the first committed step in the biosynthesis of AMP from IMP. This is Adenylosuccinate synthetase from Clostridium acetobutylicum (strain ATCC 824 / DSM 792 / JCM 1419 / IAM 19013 / LMG 5710 / NBRC 13948 / NRRL B-527 / VKM B-1787 / 2291 / W).